We begin with the raw amino-acid sequence, 291 residues long: Meiosis-specific protein SPO13 (291 aa).

Disordered stretches follow at residues 1-30, 116-143, and 271-291; these read MAPR…QEKT, SFDN…QSSQ, and CSDY…SSLN. A Nuclear localization signal motif is present at residues 3–6; sequence PRKR. Over residues 116–125 the composition is skewed to basic and acidic residues; that stretch reads SFDNSLRFED. Positions 130–143 are enriched in polar residues; it reads PKSTSTPVLSQSSQ.

It is found in the nucleus. In terms of biological role, required for meiosis I segmentation. Probably acts as a regulator of kinetochore function during meiosis I: required both for mono-orientation of kinetochores on sister chromosomes and protection of centromeric cohesin from separase-mediated cleavage. The polypeptide is Meiosis-specific protein SPO13 (SPO13) (Saccharomyces cerevisiae (strain ATCC 204508 / S288c) (Baker's yeast)).